A 184-amino-acid polypeptide reads, in one-letter code: Shikimate kinase (184 aa).

Residue 17–22 (GAGKTT) participates in ATP binding. Residue Thr21 participates in Mg(2+) binding. Substrate is bound by residues Asp39, Arg63, and Gly85. Position 123 (Arg123) interacts with ATP. Arg142 contributes to the substrate binding site.

It belongs to the shikimate kinase family. Monomer. Mg(2+) serves as cofactor.

The protein localises to the cytoplasm. It catalyses the reaction shikimate + ATP = 3-phosphoshikimate + ADP + H(+). The protein operates within metabolic intermediate biosynthesis; chorismate biosynthesis; chorismate from D-erythrose 4-phosphate and phosphoenolpyruvate: step 5/7. Catalyzes the specific phosphorylation of the 3-hydroxyl group of shikimic acid using ATP as a cosubstrate. This Burkholderia thailandensis (strain ATCC 700388 / DSM 13276 / CCUG 48851 / CIP 106301 / E264) protein is Shikimate kinase.